The sequence spans 487 residues: Cytochrome P450 2C4 (487 aa).

C432 contributes to the heme binding site.

Belongs to the cytochrome P450 family. Heme serves as cofactor.

The protein localises to the endoplasmic reticulum membrane. Its subcellular location is the microsome membrane. The catalysed reaction is an organic molecule + reduced [NADPH--hemoprotein reductase] + O2 = an alcohol + oxidized [NADPH--hemoprotein reductase] + H2O + H(+). Its function is as follows. Cytochromes P450 are a group of heme-thiolate monooxygenases. In liver microsomes, this enzyme is involved in an NADPH-dependent electron transport pathway. It oxidizes a variety of structurally unrelated compounds, including steroids, fatty acids, and xenobiotics. In Oryctolagus cuniculus (Rabbit), this protein is Cytochrome P450 2C4 (CYP2C4).